Consider the following 416-residue polypeptide: Gasdermin-B (416 aa).

The triggers pyroptosis stretch occupies residues 1-280 (MFSVFEEITR…EKRKDVLNSL (280 aa)). Beta stranded transmembrane passes span 83-101 (EFQI…VRLP) and 102-125 (KEIT…ENRI). (Microbial infection) Glycyl lysine isopeptide (Lys-Gly) (interchain with G-Cter in ubiquitin) cross-links involve residues Lys166, Lys177, Lys190, and Lys192. Transmembrane regions (beta stranded) follow at residues 167 to 183 (EETL…SQIS) and 184 to 198 (QGHL…REVT). Residues 229 to 250 (KSFPEEKDGASSCLGKSLGSED) form a disordered region. A coiled-coil region spans residues 248-276 (SEDSRNMKEKLEDMESVLKDLTEEKRKDV). Residue Met308 forms a (Microbial infection) Glycyl lysine isopeptide (Lys-Gly) (interchain with G-Cter in ubiquitin) linkage.

It belongs to the gasdermin family. In terms of assembly, homooligomer; homooligomeric ring-shaped pore complex containing 24-26 subunits when inserted in the membrane. Cleavage by granzyme A (GZMA) relieves autoinhibition by releasing the N-terminal moiety (Gasdermin-B, N-terminal) that initiates pyroptosis. Not cleaved by other granzymes. Major cleavage site takes places after Lys-244; a minor cleavage site takes place after Lys-229. Cleavage by neutrophil elastase ELANE, inhibits its ability to trigger pyroptosis. Post-translationally, palmitoylated. In terms of processing, (Microbial infection) Ubiquitinated by S.flexneri IpaH7.8, leading to its degradation by the proteasome, thereby preventing its ability to form pores in bacterial-derived membranes. As to expression, in the gastrointestinal tract, expressed in proliferating cells, including in the basal cell layer of esophagus and in isthmus/neck of stomach.

It localises to the cytoplasm. The protein localises to the cell membrane. The full-length protein before cleavage is inactive: intramolecular interactions between N- and C-terminal domains mediate autoinhibition in the absence of activation signal. The intrinsic pyroptosis-inducing activity is carried by the released N-terminal moiety (Gasdermin-B, N-terminal) following cleavage by granzyme A (GZMA). Its function is as follows. Precursor of a pore-forming protein that acts as a downstream mediator of granzyme-mediated cell death. This form constitutes the precursor of the pore-forming protein: upon cleavage, the released N-terminal moiety (Gasdermin-B, N-terminal) binds to membranes and forms pores, triggering pyroptosis. Also acts as a regulator of epithelial cell repair independently of programmed cell death: translocates to the plasma membrane and promotes epithelial maintenance and repair by regulating PTK2/FAK-mediated phosphorylation of PDGFA. Functionally, pore-forming protein produced by cleavage by granzyme A (GZMA), which causes membrane permeabilization and pyroptosis in target cells of cytotoxic T and natural killer (NK) cells. Key downstream mediator of granzyme-mediated cell death: (1) granzyme A (GZMA), delivered to target cells from cytotoxic T- and NK-cells, (2) specifically cleaves Gasdermin-B to generate this form. After cleavage, moves to the plasma membrane, homooligomerizes within the membrane and forms pores of 10-15 nanometers (nm) of inner diameter, triggering pyroptosis. The different isoforms recognize and bind different phospholipids on membranes, promoting cell death of different target cells. In terms of biological role, precursor of a pore-forming protein that acts as a downstream mediator of granzyme-mediated cell death and mediates pyroptosis. Following cleavage and activation by granzyme A (GZMA), the N-terminal part binds to membrane inner leaflet lipids, homooligomerizes within the human plasma membrane and forms pores of 10-15 nanometers (nm) of inner diameter, triggering pyroptosis. Recognizes and binds membrane inner leaflet lipids of human cells, such as phosphatidylinositol 4-phosphate, phosphatidylinositol 5-phosphate, bisphosphorylated phosphatidylinositols, such as phosphatidylinositol (4,5)-bisphosphate, and more weakly to phosphatidic acid. Also binds sufatide, a component of the apical membrane of epithelial cells. Precursor of a pore-forming protein that acts as a downstream mediator of granzyme-mediated cell death and mediates pyroptosis of human cells. Following cleavage and activation by granzyme A (GZMA), the N-terminal part binds to membrane inner leaflet lipids, homooligomerizes within the human plasma membrane and forms pores of 10-15 nanometers (nm) of inner diameter, triggering pyroptosis. Its function is as follows. Precursor of a pore-forming protein that acts as a downstream mediator of granzyme-mediated cell death and specifically mediates cell death of Gram-negative bacteria in response to infection. Following cleavage and activation by granzyme A (GZMA), the N-terminal part recognizes and binds phospholipids found on Gram-negative bacterial membranes, such as lipid A and cariolipin, homooligomerizes within the bacterial membranes and forms pores, triggering pyroptosis followed by cell death. In contrast to isoform 4, does not bind to membrane inner leaflet lipids of host human cell, such as phosphatidylinositol 4-phosphate, phosphatidylinositol 5-phosphate, bisphosphorylated phosphatidylinositols, such as phosphatidylinositol (4,5)-bisphosphate. Functionally, not able to trigger pyroptosis. In Homo sapiens (Human), this protein is Gasdermin-B.